The primary structure comprises 113 residues: Large ribosomal subunit protein uL22 (113 aa).

This sequence belongs to the universal ribosomal protein uL22 family. In terms of assembly, part of the 50S ribosomal subunit.

This protein binds specifically to 23S rRNA; its binding is stimulated by other ribosomal proteins, e.g. L4, L17, and L20. It is important during the early stages of 50S assembly. It makes multiple contacts with different domains of the 23S rRNA in the assembled 50S subunit and ribosome. In terms of biological role, the globular domain of the protein is located near the polypeptide exit tunnel on the outside of the subunit, while an extended beta-hairpin is found that lines the wall of the exit tunnel in the center of the 70S ribosome. The protein is Large ribosomal subunit protein uL22 of Xanthomonas oryzae pv. oryzae (strain MAFF 311018).